A 212-amino-acid polypeptide reads, in one-letter code: MAARRGALIVLEGVDRAGKSTQSRKLVEALCAAGHRAELLRFPERSTEIGKLLSSYLQKKSDVEDHSVHLLFSANRWEQVPLIKEKLSQGVTLVVDRYAFSGVAFTGAKENFSLDWCKQPDVGLPKPDLVLFLQLQLADAAKRGAFGHERYENGAFQERALRCFHQLMKDTTLNWKMVDASKSIEAVHEDIRVLSEDAIRTATEKPLGELWK.

Alanine 2 bears the N-acetylalanine mark. ATP-binding positions include 16-21 and arginine 97; that span reads RAGKST. The interval 133-157 is LID; that stretch reads LQLQLADAAKRGAFGHERYENGAFQ. At lysine 169 the chain carries N6-acetyllysine. Positions 182 and 192 each coordinate ATP.

It belongs to the thymidylate kinase family. In terms of assembly, homodimer. The cofactor is Mg(2+).

The catalysed reaction is dTMP + ATP = dTDP + ADP. The protein operates within pyrimidine metabolism; dTTP biosynthesis. In terms of biological role, catalyzes the phosphorylation of thymidine monophosphate (dTMP) to thymidine diphosphate (dTDP), the immediate precursor for the DNA building block dTTP, with ATP as the preferred phosphoryl donor in the presence of Mg(2+). This is Thymidylate kinase (DTYMK) from Homo sapiens (Human).